Consider the following 644-residue polypeptide: Transcription factor btd (644 aa).

Disordered stretches follow at residues 16–65 and 101–196; these read HQAQ…TQQQ and APPS…AGSP. Composition is skewed to low complexity over residues 101 to 119 and 140 to 196; these read APPS…SSPL and ASPN…AGSP. 3 C2H2-type zinc fingers span residues 333-357, 363-385, and 391-413; these read HICH…LRWH, FLCL…GRTH, and YACP…KKTH. 2 disordered regions span residues 437-461 and 478-537; these read LEKK…QPDT and TSAG…SSSA. Composition is skewed to low complexity over residues 499 to 508 and 521 to 537; these read TTTTSSAAAS and AIQP…SSSA.

Its subcellular location is the nucleus. Its function is as follows. Required for the development of the antennal, intercalary and mandibular segments of the head. This Drosophila melanogaster (Fruit fly) protein is Transcription factor btd (btd).